Here is a 354-residue protein sequence, read N- to C-terminus: Protein CbrA (354 aa).

Belongs to the CbrA family.

The polypeptide is Protein CbrA (cbrA) (Escherichia coli (strain K12)).